A 497-amino-acid polypeptide reads, in one-letter code: tRNA-2-methylthio-N(6)-dimethylallyladenosine synthase (497 aa).

An MTTase N-terminal domain is found at 4-120 (RSYEVRTFGC…LPVLLERARH (117 aa)). [4Fe-4S] cluster-binding residues include C13, C49, C83, C157, C161, and C164. The Radical SAM core domain occupies 143–374 (RASHHSAWVS…ALQDEVSWAQ (232 aa)). Positions 376–445 (RELVGRRVEL…PHHLTADGPL (70 aa)) constitute a TRAM domain.

Belongs to the methylthiotransferase family. MiaB subfamily. In terms of assembly, monomer. [4Fe-4S] cluster serves as cofactor.

It is found in the cytoplasm. It carries out the reaction N(6)-dimethylallyladenosine(37) in tRNA + (sulfur carrier)-SH + AH2 + 2 S-adenosyl-L-methionine = 2-methylsulfanyl-N(6)-dimethylallyladenosine(37) in tRNA + (sulfur carrier)-H + 5'-deoxyadenosine + L-methionine + A + S-adenosyl-L-homocysteine + 2 H(+). Functionally, catalyzes the methylthiolation of N6-(dimethylallyl)adenosine (i(6)A), leading to the formation of 2-methylthio-N6-(dimethylallyl)adenosine (ms(2)i(6)A) at position 37 in tRNAs that read codons beginning with uridine. In Frankia alni (strain DSM 45986 / CECT 9034 / ACN14a), this protein is tRNA-2-methylthio-N(6)-dimethylallyladenosine synthase.